We begin with the raw amino-acid sequence, 252 residues long: 2-succinyl-6-hydroxy-2,4-cyclohexadiene-1-carboxylate synthase (252 aa).

Belongs to the AB hydrolase superfamily. MenH family. In terms of assembly, monomer.

The enzyme catalyses 5-enolpyruvoyl-6-hydroxy-2-succinyl-cyclohex-3-ene-1-carboxylate = (1R,6R)-6-hydroxy-2-succinyl-cyclohexa-2,4-diene-1-carboxylate + pyruvate. It functions in the pathway quinol/quinone metabolism; 1,4-dihydroxy-2-naphthoate biosynthesis; 1,4-dihydroxy-2-naphthoate from chorismate: step 3/7. Its pathway is quinol/quinone metabolism; menaquinone biosynthesis. Its function is as follows. Catalyzes a proton abstraction reaction that results in 2,5-elimination of pyruvate from 2-succinyl-5-enolpyruvyl-6-hydroxy-3-cyclohexene-1-carboxylate (SEPHCHC) and the formation of 2-succinyl-6-hydroxy-2,4-cyclohexadiene-1-carboxylate (SHCHC). The sequence is that of 2-succinyl-6-hydroxy-2,4-cyclohexadiene-1-carboxylate synthase from Escherichia coli O7:K1 (strain IAI39 / ExPEC).